The following is a 426-amino-acid chain: Serine--tRNA ligase (426 aa).

An L-serine-binding site is contributed by 233 to 235 (TAE). 264–266 (RSE) is a binding site for ATP. Glu287 is a binding site for L-serine. Position 351–354 (351–354 (EISS)) interacts with ATP. Ser387 provides a ligand contact to L-serine.

Belongs to the class-II aminoacyl-tRNA synthetase family. Type-1 seryl-tRNA synthetase subfamily. Homodimer. The tRNA molecule binds across the dimer.

It localises to the cytoplasm. It catalyses the reaction tRNA(Ser) + L-serine + ATP = L-seryl-tRNA(Ser) + AMP + diphosphate + H(+). The catalysed reaction is tRNA(Sec) + L-serine + ATP = L-seryl-tRNA(Sec) + AMP + diphosphate + H(+). It functions in the pathway aminoacyl-tRNA biosynthesis; selenocysteinyl-tRNA(Sec) biosynthesis; L-seryl-tRNA(Sec) from L-serine and tRNA(Sec): step 1/1. In terms of biological role, catalyzes the attachment of serine to tRNA(Ser). Is also able to aminoacylate tRNA(Sec) with serine, to form the misacylated tRNA L-seryl-tRNA(Sec), which will be further converted into selenocysteinyl-tRNA(Sec). In Clostridium botulinum (strain Loch Maree / Type A3), this protein is Serine--tRNA ligase.